The chain runs to 187 residues: UPF0301 protein Shewmr7_1270 (187 aa).

The protein belongs to the UPF0301 (AlgH) family.

This is UPF0301 protein Shewmr7_1270 from Shewanella sp. (strain MR-7).